The following is a 223-amino-acid chain: Ubiquitin carboxyl-terminal hydrolase isozyme L1 (223 aa).

Met1 carries the post-translational modification N-acetylmethionine. One can recognise a UCH catalytic domain in the interval 2–221; sequence QLKPMEINPE…VRFSAVALCK (220 aa). Residues 5 to 10 are interaction with ubiquitin; it reads PMEINP. Cys90 functions as the Nucleophile in the catalytic mechanism. A Phosphoserine modification is found at Ser125. His161 functions as the Proton donor in the catalytic mechanism. Residues 211–216 are interaction with ubiquitin; sequence EVRFSA. A lipid anchor (S-farnesyl cysteine) is attached at Cys220. The propeptide at 221–223 is removed in mature form; the sequence is KCA.

This sequence belongs to the peptidase C12 family. Monomer. Homodimer. Interacts with COPS5 and SNCA. O-glycosylated.

Its subcellular location is the cytoplasm. The protein resides in the endoplasmic reticulum membrane. It catalyses the reaction Thiol-dependent hydrolysis of ester, thioester, amide, peptide and isopeptide bonds formed by the C-terminal Gly of ubiquitin (a 76-residue protein attached to proteins as an intracellular targeting signal).. In terms of biological role, ubiquitin-protein hydrolase involved both in the processing of ubiquitin precursors and of ubiquitinated proteins. This enzyme is a thiol protease that recognizes and hydrolyzes a peptide bond at the C-terminal glycine of ubiquitin. Also binds to free monoubiquitin and may prevent its degradation in lysosomes. The homodimer may have ATP-independent ubiquitin ligase activity. This is Ubiquitin carboxyl-terminal hydrolase isozyme L1 (UCHL1) from Monodelphis domestica (Gray short-tailed opossum).